The chain runs to 493 residues: Aerolysin (493 aa).

An N-terminal signal peptide occupies residues 1–23 (MQKIKLTGLSLIISGLLMAQAQA). Intrachain disulfides connect Cys42–Cys98 and Cys182–Cys187. Positions 68-84 (WQISGLANGWVIMGPGY) are interaction with host N-linked glycan. Residues 256–288 (YGLSEKVTTKNKFKWPLVGETELSIEIAANQSW) form a part of the transmembrane beta-barrel after proteolytic activation of the toxin and insertion into the host membrane region. An interaction with glycans from host GPI-anchor region spans residues 346–355 (RWGGNAWYTH). Residues 446–493 (AADSKVRRARSVDGAGQGLRLEIPLDAQELSGLGFNNVSLSVTPAANQ) constitute a propeptide that is removed on maturation.

It belongs to the aerolysin family. Homodimer in solution; homoheptamer in the host membrane. After binding to GPI-anchored proteins in target membranes and proteolytic removal of the C-terminal propeptide, the protein assembles into a heptameric pre-pore complex. A further conformation change leads to insertion into the host membrane. In terms of processing, proteolytic cleavage and subsequent release of the propeptide trigger a major conformation change, leading to the formation of a heptameric pre-pore that then inserts into the host membrane.

The protein resides in the secreted. The protein localises to the host cell membrane. Secreted, cytolytic toxin that forms pores in host membranes after proteolytic removal of a C-terminal propeptide, leading to destruction of the membrane permeability barrier and host cell death. The pores are formed by transmembrane beta-strands and are approximately 3 nm in diameter. This chain is Aerolysin (aerA), found in Aeromonas hydrophila.